Reading from the N-terminus, the 282-residue chain is Bis(5'-nucleosyl)-tetraphosphatase, symmetrical (282 aa).

The protein belongs to the Ap4A hydrolase family.

The catalysed reaction is P(1),P(4)-bis(5'-adenosyl) tetraphosphate + H2O = 2 ADP + 2 H(+). Its function is as follows. Hydrolyzes diadenosine 5',5'''-P1,P4-tetraphosphate to yield ADP. This Salmonella paratyphi C (strain RKS4594) protein is Bis(5'-nucleosyl)-tetraphosphatase, symmetrical.